The primary structure comprises 292 residues: HTH-type transcriptional regulator BlaA (292 aa).

The HTH lysR-type domain maps to 5-62 (LPLNALRAFEASARHLNFTKAALELYVTQGAVSQQVRMLEERLGVILFKRLPRGLEMT). A DNA-binding region (H-T-H motif) is located at residues 22 to 41 (FTKAALELYVTQGAVSQQVR).

This sequence belongs to the LysR transcriptional regulatory family.

Its function is as follows. Positive regulator of the expression of the gene (blaB) for beta-lactamase. The chain is HTH-type transcriptional regulator BlaA (blaA) from Proteus vulgaris.